The sequence spans 658 residues: A-type ATP synthase subunit I (658 aa).

Helical transmembrane passes span 383 to 403 (MAFV…YGII), 427 to 447 (IIMM…NGFI), 475 to 495 (ILIM…ILGA), 507 to 526 (ALGS…LYLV), 530 to 552 (IFGA…LFGL), 568 to 588 (LLAL…LTGL), and 591 to 611 (EMIP…GHIA).

The protein belongs to the V-ATPase 116 kDa subunit family. As to quaternary structure, has multiple subunits with at least A(3), B(3), C, D, E, F, H, I and proteolipid K(x).

The protein localises to the cell membrane. Functionally, component of the A-type ATP synthase that produces ATP from ADP in the presence of a proton gradient across the membrane. The chain is A-type ATP synthase subunit I from Methanothermobacter thermautotrophicus (strain ATCC 29096 / DSM 1053 / JCM 10044 / NBRC 100330 / Delta H) (Methanobacterium thermoautotrophicum).